The following is a 335-amino-acid chain: Ketol-acid reductoisomerase (NADP(+)) (335 aa).

The region spanning M1 to T182 is the KARI N-terminal Rossmann domain. NADP(+) is bound by residues Y25–Q28, R48, S51, S53, and D83–Q86. H108 is a catalytic residue. NADP(+) is bound at residue G134. The KARI C-terminal knotted domain occupies T183–L328. The Mg(2+) site is built by D191, E195, E227, and E231. S252 provides a ligand contact to substrate.

Belongs to the ketol-acid reductoisomerase family. Mg(2+) is required as a cofactor.

It carries out the reaction (2R)-2,3-dihydroxy-3-methylbutanoate + NADP(+) = (2S)-2-acetolactate + NADPH + H(+). It catalyses the reaction (2R,3R)-2,3-dihydroxy-3-methylpentanoate + NADP(+) = (S)-2-ethyl-2-hydroxy-3-oxobutanoate + NADPH + H(+). Its pathway is amino-acid biosynthesis; L-isoleucine biosynthesis; L-isoleucine from 2-oxobutanoate: step 2/4. It participates in amino-acid biosynthesis; L-valine biosynthesis; L-valine from pyruvate: step 2/4. In terms of biological role, involved in the biosynthesis of branched-chain amino acids (BCAA). Catalyzes an alkyl-migration followed by a ketol-acid reduction of (S)-2-acetolactate (S2AL) to yield (R)-2,3-dihydroxy-isovalerate. In the isomerase reaction, S2AL is rearranged via a Mg-dependent methyl migration to produce 3-hydroxy-3-methyl-2-ketobutyrate (HMKB). In the reductase reaction, this 2-ketoacid undergoes a metal-dependent reduction by NADPH to yield (R)-2,3-dihydroxy-isovalerate. The sequence is that of Ketol-acid reductoisomerase (NADP(+)) from Methanosarcina mazei (strain ATCC BAA-159 / DSM 3647 / Goe1 / Go1 / JCM 11833 / OCM 88) (Methanosarcina frisia).